Reading from the N-terminus, the 266-residue chain is Apolipoprotein A-I (266 aa).

A signal peptide spans 1–18; it reads MKAVVLTLAVLFLTGSQA. A run of 2 repeats spans residues 67 to 88 and 89 to 110. The 10 X approximate tandem repeats stretch occupies residues 67–266; sequence LKLLDNWDSL…DEATKKLNSQ (200 aa). Met109 is modified (methionine sulfoxide). A 3; half-length repeat occupies 111-121; the sequence is KDLEEVKKKVQ. Tandem repeats lie at residues 122 to 143, 144 to 165, 166 to 187, 188 to 209, and 210 to 231. The stretch at 232–242 is one 9; half-length repeat; sequence PALEDLRQGLL. Repeat 10 spans residues 243-266; that stretch reads PVLENFRDSLLAAVDEATKKLNSQ.

Belongs to the apolipoprotein A1/A4/E family. In terms of assembly, homodimer. Interacts with APOA1BP and CLU. Component of a sperm activating protein complex (SPAP), consisting of APOA1, an immunoglobulin heavy chain, an immunoglobulin light chain and albumin. Interacts with NDRG1. Interacts with SCGB3A2. Interacts with NAXE and YJEFN3. Post-translationally, glycosylated. Palmitoylated. In terms of processing, phosphorylation sites are present in the extracellular medium.

Its subcellular location is the secreted. Functionally, participates in the reverse transport of cholesterol from tissues to the liver for excretion by promoting cholesterol efflux from tissues and by acting as a cofactor for the lecithin cholesterol acyltransferase (LCAT). As part of the SPAP complex, activates spermatozoa motility. This chain is Apolipoprotein A-I (APOA1), found in Neomonachus schauinslandi (Hawaiian monk seal).